We begin with the raw amino-acid sequence, 324 residues long: Nidogen-1 (324 aa).

Positions 16-178 (PFLADLDTTD…GVWVFEIGSP (163 aa)) constitute an NIDO domain. Residue Asn-97 is glycosylated (N-linked (GlcNAc...) asparagine). Sulfotyrosine occurs at positions 200 and 205. A disordered region spans residues 219–259 (TQPFPSHSPRRGYPDPHNVPRTLAPSYEATERPHGIPTERT). Positions 247–259 (ATERPHGIPTERT) are enriched in basic and acidic residues. One can recognise an EGF-like domain in the interval 295-324 (SQQTCANNRHQCSVHAECRDYATGFCCRCV). Disulfide bonds link Cys-299-Cys-312 and Cys-306-Cys-321.

Interacts with FBLN1. Interacts with LGALS3BP. Interacts with PLXDC1. Interacts with SVEP1. In terms of processing, N- and O-glycosylated.

The protein localises to the secreted. It is found in the extracellular space. The protein resides in the extracellular matrix. Its subcellular location is the basement membrane. In terms of biological role, sulfated glycoprotein widely distributed in basement membranes and tightly associated with laminin. Also binds to collagen IV and perlecan. It probably has a role in cell-extracellular matrix interactions. The chain is Nidogen-1 (Nid1) from Rattus norvegicus (Rat).